Consider the following 481-residue polypeptide: Leukocyte immunoglobulin-like receptor subfamily A member 6 (481 aa).

A signal peptide spans 1-23; that stretch reads MTPALTALLCLGLSLGPRTHVQA. In terms of domain architecture, Ig-like C2-type 1 spans 24–118; that stretch reads GPLPKPTLWA…PSDPLELVVT (95 aa). Residues 24–447 lie on the Extracellular side of the membrane; it reads GPLPKPTLWA…SHAKDYTVEN (424 aa). Residues Cys49 and Cys98 are joined by a disulfide bond. The N-linked (GlcNAc...) asparagine glycan is linked to Asn139. 2 disulfide bridges follow: Cys144/Cys196 and Cys245/Cys296. Ig-like C2-type domains follow at residues 225-314 and 323-408; these read PSLL…DPLN and DRVS…HLLS. 2 N-linked (GlcNAc...) asparagine glycosylation sites follow: Asn301 and Asn340. A disulfide bond links Cys345 and Cys396. Positions 418 to 439 are disordered; that stretch reads VSGPSGGPSLPPTGPPSTPASH. A compositionally biased stretch (pro residues) spans 426 to 435; that stretch reads SLPPTGPPST. Residues 448–468 form a helical membrane-spanning segment; it reads LIRMGMAGLVLVVLGILLFEA. Over 469–481 the chain is Cytoplasmic; the sequence is QHSQRSPQDAARR.

It is found in the membrane. May act as receptor for class I MHC antigens. The polypeptide is Leukocyte immunoglobulin-like receptor subfamily A member 6 (LILRA6) (Pan troglodytes (Chimpanzee)).